A 260-amino-acid chain; its full sequence is Pro-opiomelanocortin (260 aa).

Residues 1-25 (MLQPVWSCILALLGVFIFHVGEVRS) form the signal peptide. Pyrrolidone carboxylic acid is present on Gln26. Residue Phe86 is modified to Phenylalanine amide. The N-linked (GlcNAc...) asparagine glycan is linked to Asn90. Residues 104-138 (EDIANYPILNLLTGSDNQNTQQGIMEDEAVDRQDS) constitute a propeptide that is removed on maturation. Val153 carries the valine amide modification.

It belongs to the POMC family. In terms of processing, specific enzymatic cleavages at paired basic residues yield the different active peptides.

The protein localises to the secreted. In terms of biological role, stimulates the adrenal glands to release cortisol. Anorexigenic peptide. Increases the pigmentation of skin by increasing melanin production in melanocytes. Functionally, increases the pigmentation of skin by increasing melanin production in melanocytes. Its function is as follows. Endogenous orexigenic opiate. In terms of biological role, endogenous opiate. The protein is Pro-opiomelanocortin (pomc) of Pelophylax ridibundus (Marsh frog).